The following is a 95-amino-acid chain: Opiscorpine-2 (95 aa).

Residues 1-19 (MNNKLTALIFHGLLAIASC) form the signal peptide. Residues 55 to 95 (EFMCMANMDPTGSCETHCQKASGEKGYCHGTKCKCGVPLSY) enclose the BetaSPN-type CS-alpha/beta domain. 3 cysteine pairs are disulfide-bonded: cysteine 58/cysteine 82, cysteine 68/cysteine 87, and cysteine 72/cysteine 89.

Belongs to the long chain scorpion toxin family. Class 3 subfamily. As to expression, expressed by the venom gland.

It localises to the secreted. Functionally, has antimicrobial activity against yeasts and bacteria. In Opistophthalmus carinatus (African yellow leg scorpion), this protein is Opiscorpine-2.